The sequence spans 532 residues: Omega-hydroxyceramide transacylase (532 aa).

The region spanning 16-185 (ISFSGSGFLS…TGMQPCAFWT (170 aa)) is the PNPLA domain. A GXSXG motif is present at residues 51–55 (GTSAG). Residue Ser53 is the Nucleophile of the active site. The Proton acceptor role is filled by Asp172. The DGA/G motif lies at 172–174 (DGG). Disordered regions lie at residues 290-457 (PERS…ELGQ) and 489-532 (VTES…SKVQ). Over residues 310–322 (PHKEWVPKGDGRG) the composition is skewed to basic and acidic residues. 2 stretches are compositionally biased toward low complexity: residues 380 to 389 (PPSSTPGSSL) and 397 to 411 (SPLS…SGSP). The span at 517–532 (GFPRHSGSKKPSSKVQ) shows a compositional bias: basic residues.

In terms of tissue distribution, expressed in the digestive system. Expressed in the epidermis of skin keratinocytes. Strongly expressed in the granular layer. Expressed in the upper epidermis and eccrine sweat glands of the dermis and in the region of keratin filament bundles, which is more pronounced in upper epidermal layers and in the lower cornified layers.

The protein localises to the cytoplasm. The enzyme catalyses an N-(omega-hydroxy-ultra-long chain fatty acyl)-sphingoid base + a (9Z,12Z)-octadecadienoyl-containing triacyl-sn-glycerol = an N-[omega-(9Z,12Z-octadecadienoyloxy)-O-ultra-long chain fatty acyl]-sphingoid base + a diacylglycerol. The catalysed reaction is an N-(omega-hydroxy-ultra-long chain fatty acyl)-sphing-4-enine + a (9Z,12Z)-octadecadienoyl-containing triacyl-sn-glycerol = an N-(omega-(9Z,12Z-octadecadienoyloxy)-ultra-long chain fatty acyl)-sphing-4-enine + a diacylglycerol. It carries out the reaction N-(30-hydroxytriacontanoyl)-sphing-4-enine + 1,2,3-tri-(9Z,12Z)-octadecadienoylglycerol = N-[30-(9Z,12Z-octadecadienoyloxy)-triacontanoyl]-sphing-4-enine + di-(9Z,12Z)-octadecadienoylglycerol. It catalyses the reaction N-(28-hydroxyoctacosanoyl)-sphing-4-enine + a (9Z,12Z)-octadecadienoyl-containing triacyl-sn-glycerol = N-(28-(9Z,12Z-octadecadienoyloxy)-octacosanoyl)-sphing-4-enine + a diacylglycerol. The enzyme catalyses N-(32-hydroxydotriacontanoyl)-sphing-4-enine + a (9Z,12Z)-octadecadienoyl-containing triacyl-sn-glycerol = N-(32-(9Z,12Z-octadecadienoyloxy)-dotricontanoyl)-sphing-4-enine + a diacylglycerol. The catalysed reaction is N-(32-hydroxydotriacontenoyl)-sphing-4-enine + a (9Z,12Z)-octadecadienoyl-containing triacyl-sn-glycerol = an N-(32-(9Z,12Z-octadecadienoyloxy)-dotriacontenoyl)-sphing-4-enine + a diacylglycerol. It carries out the reaction an N-(34-hydroxytetratriacontenoyl)-sphing-4-enine + a (9Z,12Z)-octadecadienoyl-containing triacyl-sn-glycerol = an N-(34-(9Z,12Z-octadecadienoyloxy)-tetratriacontenoyl)-sphing-4-enine + a diacylglycerol. It catalyses the reaction an N-(34-hydroxytetratriacontadienoyl)-sphing-4-enine + a (9Z,12Z)-octadecadienoyl-containing triacyl-sn-glycerol = an N-(34-(9Z,12Z-octadecadienoyloxy)-tetratriacontadienoyl)-sphing-4-enine + a diacylglycerol. The enzyme catalyses an N-(36-hydroxyhexatriacontenoyl)-sphing-4-enine + a (9Z,12Z)-octadecadienoyl-containing triacyl-sn-glycerol = an N-(36-(9Z,12Z-octadecadienoyloxy)-hexatriacontenoyl)-sphing-4-enine + a diacylglycerol. The catalysed reaction is an N-(36-hydroxyhexatriacontadienoyl)-sphing-4-enine + a (9Z,12Z)-octadecadienoyl-containing triacyl-sn-glycerol = an N-(36-(9Z,12Z-octadecadienoyloxy)-hexatriacontadienoyl)-sphing-4-enine + a diacylglycerol. It carries out the reaction an N-(38-hydroxyoctatriacontenoyl)-sphing-4-enine + a (9Z,12Z)-octadecadienoyl-containing triacyl-sn-glycerol = an N-(38-(9Z,12Z-octadecadienoyloxy)-octatriacontenoyl)-sphing-4-enine + a diacylglycerol. Functionally, omega-hydroxyceramide transacylase involved in the synthesis of omega-O-acylceramides (esterified omega-hydroxyacyl-sphingosine; EOS), which are extremely hydrophobic lipids involved in skin barrier formation. Catalyzes the last step of the synthesis of omega-O-acylceramides by transferring linoleic acid from triglycerides to an omega-hydroxyceramide. Omega-O-acylceramides, are required for the biogenesis of lipid lamellae in the stratum corneum and the formation of the cornified lipid envelope which are essential for the epidermis barrier function. These lipids also play a role in keratinocyte differentiation. May also act on omega-hydroxylated ultra-long chain fatty acids (omega-OH ULCFA) and acylglucosylceramides (GlcEOS). This is Omega-hydroxyceramide transacylase from Homo sapiens (Human).